A 207-amino-acid polypeptide reads, in one-letter code: ATP-dependent Clp protease proteolytic subunit (207 aa).

Ser111 (nucleophile) is an active-site residue. His136 is a catalytic residue.

It belongs to the peptidase S14 family. As to quaternary structure, fourteen ClpP subunits assemble into 2 heptameric rings which stack back to back to give a disk-like structure with a central cavity, resembling the structure of eukaryotic proteasomes.

The protein resides in the cytoplasm. It carries out the reaction Hydrolysis of proteins to small peptides in the presence of ATP and magnesium. alpha-casein is the usual test substrate. In the absence of ATP, only oligopeptides shorter than five residues are hydrolyzed (such as succinyl-Leu-Tyr-|-NHMec, and Leu-Tyr-Leu-|-Tyr-Trp, in which cleavage of the -Tyr-|-Leu- and -Tyr-|-Trp bonds also occurs).. In terms of biological role, cleaves peptides in various proteins in a process that requires ATP hydrolysis. Has a chymotrypsin-like activity. Plays a major role in the degradation of misfolded proteins. In Proteus mirabilis (strain HI4320), this protein is ATP-dependent Clp protease proteolytic subunit.